The following is a 118-amino-acid chain: Small ribosomal subunit protein uS13 (118 aa).

Positions 92–118 are disordered; it reads RRGLPVRGQRTKTNARTRKGPRKPIKK.

Belongs to the universal ribosomal protein uS13 family. Part of the 30S ribosomal subunit. Forms a loose heterodimer with protein S19. Forms two bridges to the 50S subunit in the 70S ribosome.

Its function is as follows. Located at the top of the head of the 30S subunit, it contacts several helices of the 16S rRNA. In the 70S ribosome it contacts the 23S rRNA (bridge B1a) and protein L5 of the 50S subunit (bridge B1b), connecting the 2 subunits; these bridges are implicated in subunit movement. Contacts the tRNAs in the A and P-sites. The sequence is that of Small ribosomal subunit protein uS13 from Pectobacterium carotovorum subsp. carotovorum (strain PC1).